A 606-amino-acid polypeptide reads, in one-letter code: V-type proton ATPase catalytic subunit A (606 aa).

A2 carries the N-acetylalanine modification. 240 to 247 (AFGCGKTV) is a binding site for ATP.

This sequence belongs to the ATPase alpha/beta chains family. V-ATPase is a heteromultimeric enzyme made up of two complexes: the ATP-hydrolytic V1 complex and the proton translocation V0 complex. The V1 complex consists of three catalytic AB heterodimers that form a heterohexamer, three peripheral stalks each consisting of EG heterodimers, one central rotor including subunits D and F, and the regulatory subunits C and H. The proton translocation complex V0 consists of the proton transport subunit a, a ring of proteolipid subunits c9c'', rotary subunit d, subunits e and f, and the accessory subunits vah-19/Ac45 and vah-20/PRR. Expressed in proximal but not distal germ cells.

The enzyme catalyses ATP + H2O + 4 H(+)(in) = ADP + phosphate + 5 H(+)(out). Its activity is regulated as follows. ATP hydrolysis occurs at the interface between the nucleotide-binding domains of subunits A and B. ATP hydrolysis triggers a conformational change in the subunits D and F, which induces a shift of subunit d. The c-ring is subsequently rotated and results in a continuous proton translocation across the membrane. In terms of biological role, catalytic subunit of the V1 complex of vacuolar(H+)-ATPase (V-ATPase), a multisubunit enzyme composed of a peripheral complex (V1) that hydrolyzes ATP and a membrane integral complex (V0) that translocates protons. V-ATPase is responsible for acidifying and maintaining the pH of intracellular compartments and in some cell types, is targeted to the plasma membrane, where it is responsible for acidifying the extracellular environment. Required along with other vacuolar ATPase components for the removal of protein aggregates which form in immature oocytes in the distal gonad. This removal occurs as the oocytes mature and move to the proximal gonad, is triggered by the introduction of sperm through mating and occurs before fertilization. The introduction of sperm triggers V-ATPase accumulation in proximal oocytes and induces lysosomal acidification which leads to engulfing of protein aggregates by lysosomes and subsequent clearance of the aggregates. Lysosomal acidification also leads to changes in mitochondrial morphology and function. Mitochondria in distal immature oocytes are fragmented, produce high levels of reactive oxygen species (ROS) and have high membrane potential, indicative of metabolic inactivity. In contrast, mitochondria in proximal mature oocytes are tubular with lower ROS levels and membrane potential, indicative of an active metabolic state required for aggregate mobilization before clearance. Involved in receptor-mediated endocytosis. The sequence is that of V-type proton ATPase catalytic subunit A from Caenorhabditis elegans.